We begin with the raw amino-acid sequence, 430 residues long: Histidine--tRNA ligase (430 aa).

Belongs to the class-II aminoacyl-tRNA synthetase family. Homodimer.

The protein resides in the cytoplasm. The enzyme catalyses tRNA(His) + L-histidine + ATP = L-histidyl-tRNA(His) + AMP + diphosphate + H(+). This is Histidine--tRNA ligase (hisS) from Chlamydia pneumoniae (Chlamydophila pneumoniae).